The following is a 139-amino-acid chain: GSK3B-interacting protein (139 aa).

A required for PRKAR2A interaction; contributes to a protective effect against H(2)O(2)-induced apoptosis region spans residues 41–45 (VNDVL). Residues 115-139 (SPAYREAFGNALLQRLEALKREGQS) are interaction with GSK3B and acts as a GSK3B inhibitor.

The protein belongs to the GSKIP family. Forms a complex composed of PRKAR2A or PRKAR2B, GSK3B and GSKIP through GSKIP interaction; facilitates PKA-induced phosphorylation of GSK3B leading to GSK3B inactivation; recruits DNM1L through GSK3B for PKA-mediated phosphorylation of DNM1L; promotes beta-catenin degradation through GSK3B-induced phosphorylation of beta-catenin; stabilizes beta-catenin and enhances Wnt-induced signaling through PKA-induced phosphorylation of beta-catenin. Interacts with GSK3B; induces GSK3B-mediated phosphorylation of GSKIP and inhibits GSK3B kinase activity. Phosphorylated by GSK3B.

It localises to the cytoplasm. The protein resides in the nucleus. Functionally, A-kinase anchoring protein for GSK3B and PKA that regulates or facilitates their kinase activity towards their targets. The ternary complex enhances Wnt-induced signaling by facilitating the GSK3B- and PKA-induced phosphorylation of beta-catenin leading to beta-catenin degradation and stabilization respectively. Upon cAMP activation, the ternary complex contributes to neuroprotection against oxidative stress-induced apoptosis by facilitating the PKA-induced phosphorylation of DML1 and PKA-induced inactivation of GSK3B. During neurite outgrowth promotes neuron proliferation; while increases beta-catenin-induced transcriptional activity through GSK3B kinase activity inhibition, reduces N-cadherin level to promote cell cycle progression. May play a role in cleft palate formation and is required for postnatal life through modulation of the activity of GSK3B during development. The sequence is that of GSK3B-interacting protein from Bos taurus (Bovine).